The sequence spans 463 residues: MRSTAVLALLLCAGQVFALPVNSPMTKGDTKVMKCVLEVISDSLSKPSPMPVSPECLETLQGDERILSILRHQNLLKELQDLALQGAKERAQQPLKQQQPPKQQQQQQQQQQQEQQHSSFEDELSEVFENQSPDAKHRDAAAEVPSRDTMEKRKDSDKGQQDGFEATTEGPRPQAFPEPNQESPMMGDSESPGEDTATNTQSPTSLPSQEHVDPQATGDSERGLSAQQQARKAKQEEKEEEEEEEAVAREKAGPEEVPTAASSSHFHAGYKAIQKDDGQSDSQAVDGDGKTEASEALPSEGKGELEHSQQEEDGEEAMVGTPQGLFPQGGKGRELEHKQEEEEEEEERLSREWEDKRWSRMDQLAKELTAEKRLEGEDDPDRSMKLSFRTRAYGFRDPGPQLRRGWRPSSREDSVEARSDFEEKKEEEGSANRRAEDQELESLSAIEAELEKVAHQLQALRRG.

Residues 1–18 (MRSTAVLALLLCAGQVFA) form the signal peptide. Cysteines 35 and 56 form a disulfide. Residues 88–440 (KERAQQPLKQ…ANRRAEDQEL (353 aa)) form a disordered region. Low complexity predominate over residues 92-116 (QQPLKQQQPPKQQQQQQQQQQQEQQ). Serine 119 is subject to Phosphoserine. Residues 134-160 (DAKHRDAAAEVPSRDTMEKRKDSDKGQ) show a composition bias toward basic and acidic residues. The segment covering 196-208 (TATNTQSPTSLPS) has biased composition (polar residues). Residues serine 220, serine 282, and serine 308 each carry the phosphoserine modification. The segment covering 301-310 (GKGELEHSQQ) has biased composition (basic and acidic residues). At glycine 329 the chain carries Glycine amide. 2 stretches are compositionally biased toward basic and acidic residues: residues 331-340 (KGRELEHKQE) and 348-375 (RLSR…KRLE). Serine 350 and serine 383 each carry phosphoserine. Methionine 384 is modified (methionine sulfoxide). Positions 409-437 (SSREDSVEARSDFEEKKEEEGSANRRAED) are enriched in basic and acidic residues. Residues serine 410, serine 414, and serine 430 each carry the phosphoserine modification. Residue serine 430 is glycosylated (O-linked (Xyl...) (chondroitin sulfate) serine). The residue at position 438 (glutamine 438) is a Pyrrolidone carboxylic acid. Serine 444 bears the Phosphoserine mark.

This sequence belongs to the chromogranin/secretogranin protein family. As to quaternary structure, self-interacts; self-assembly is promoted in vitro by chondroitin sulfate attachment which occurs at mildly acidic pH conditions. Interacts with SCG3; this interaction is optimal in conditions mimicking the lumenal milieu of the trans-Golgi network, i.e. pH 5.5 and 10 mM Ca(+2). Interacts with ITPR1 in the secretory granules. O-glycosylated; contains chondroitin sulfate (CS). CS attachment is pH-dependent, being observed at mildly acidic conditions of pH 5 but not at neutral pH, and promotes self-assembly in vitro.

The protein localises to the cytoplasmic vesicle. It is found in the secretory vesicle. Its subcellular location is the neuronal dense core vesicle. It localises to the secreted. In terms of biological role, strongly inhibits glucose induced insulin release from the pancreas. Inhibits catecholamine release from chromaffin cells and noradrenergic neurons by acting as a non-competitive nicotinic cholinergic antagonist. Can induce mast cell migration, degranulation and production of cytokines and chemokines. Functionally, regulates granule biogenesis in endocrine cells by up-regulating the transcription of protease nexin 1 (SERPINE2) via a cAMP-PKA-SP1 pathway. This leads to inhibition of granule protein degradation in the Golgi complex which in turn promotes granule formation. Pyroglutaminated (pGlu)-serpinin exerts an antiapoptotic effect on cells exposed to oxidative stress. This is Chromogranin-A (Chga) from Mus musculus (Mouse).